We begin with the raw amino-acid sequence, 576 residues long: Glucoamylase ARB_02327-1 (576 aa).

Positions 1-20 (MGLASTVSLALLGLCSLARA) are cleaved as a signal peptide. W141 is a binding site for substrate. N-linked (GlcNAc...) asparagine glycans are attached at residues N168 and N192. The active-site Proton acceptor is the D197. Residue E200 is the Proton donor of the active site. 2 cysteine pairs are disulfide-bonded: C243-C470 and C285-C293. The 100-residue stretch at 477 to 576 (GSGGDTVAVT…GSFTQNDTWR (100 aa)) folds into the CBM20 domain. The disordered stretch occupies residues 552 to 576 (TWESDPNRSITTSASGSFTQNDTWR). 2 N-linked (GlcNAc...) asparagine glycosylation sites follow: N558 and N572.

It belongs to the glycosyl hydrolase 15 family.

Its subcellular location is the secreted. The enzyme catalyses Hydrolysis of terminal (1-&gt;4)-linked alpha-D-glucose residues successively from non-reducing ends of the chains with release of beta-D-glucose.. The chain is Glucoamylase ARB_02327-1 from Schizophyllum commune (strain H4-8 / FGSC 9210) (Split gill fungus).